The following is a 199-amino-acid chain: Small ribosomal subunit protein uS5 (199 aa).

A disordered region spans residues 1–29 (MATAGRRGGAASERRERRESRRQEASPEK). Residues 12-27 (SERRERRESRRQEASP) are compositionally biased toward basic and acidic residues. The 64-residue stretch at 32 to 95 (FLERVVTINR…EEAKKHFFTV (64 aa)) folds into the S5 DRBM domain.

Belongs to the universal ribosomal protein uS5 family. In terms of assembly, part of the 30S ribosomal subunit. Contacts proteins S4 and S8.

Its function is as follows. With S4 and S12 plays an important role in translational accuracy. Located at the back of the 30S subunit body where it stabilizes the conformation of the head with respect to the body. This Acidothermus cellulolyticus (strain ATCC 43068 / DSM 8971 / 11B) protein is Small ribosomal subunit protein uS5.